We begin with the raw amino-acid sequence, 399 residues long: Elongation factor Tu (399 aa).

In terms of domain architecture, tr-type G spans 10 to 204; the sequence is KPHVNIGTIG…AVDASIPEPE (195 aa). The G1 stretch occupies residues 19 to 26; the sequence is GHVDHGKT. Residue 19-26 participates in GTP binding; that stretch reads GHVDHGKT. Mg(2+) is bound at residue T26. The interval 60–64 is G2; the sequence is GITIN. Residues 81–84 form a G3 region; it reads DCPG. GTP is bound by residues 81–85 and 136–139; these read DCPGH and NKCD. Residues 136 to 139 are G4; the sequence is NKCD. The tract at residues 174-176 is G5; the sequence is SGL.

It belongs to the TRAFAC class translation factor GTPase superfamily. Classic translation factor GTPase family. EF-Tu/EF-1A subfamily. Monomer.

The protein localises to the cytoplasm. The catalysed reaction is GTP + H2O = GDP + phosphate + H(+). GTP hydrolase that promotes the GTP-dependent binding of aminoacyl-tRNA to the A-site of ribosomes during protein biosynthesis. This Prochlorococcus marinus (strain MIT 9312) protein is Elongation factor Tu.